A 336-amino-acid chain; its full sequence is Cytoplasmic envelopment protein 2 (336 aa).

The interaction with host BBLF1 stretch occupies residues 67 to 69; sequence KKK.

Belongs to the herpesviridae cytoplasmic envelopment protein 2 family. In terms of assembly, homodimer. Interacts with BBLF1. Interacts with the capsid. Interacts with BKRF4 (via C-terminus); this interaction is important for infectious virion production. Interacts with host TYK2; this interaction participates to the inhibition of host type I IFN signaling. Interacts with host STAT1; this interaction leads to STAT1 dephosphorylation and inhibition. Interacts with host STAT2; this interaction leads to STAT2 degradation. Interacts with host CUL1; this interaction might facilitate CUL1 recruitment to STAT2, leading to ubiquitination and degradation of the latter. Interacts with host AGO2; this interaction participates to the host miRNA regulation leading to enhanced SUMOylation.

The protein resides in the virion tegument. It is found in the host cytoplasm. The protein localises to the host nucleus. It localises to the host Golgi apparatus. Its subcellular location is the host trans-Golgi network. Functionally, plays a critical role in cytoplasmic virus egress. Participates in the final step of tegumentation and envelope acquisition within the host cytoplasm by directly interacting with the capsid. Upon virion binding to target cell, a signaling cascade is triggered to disrupt the interaction with the capsid, thereby preparing capsid uncoating. Activates the AP-1 pathway and enhances EBV reactivation and virus release. Inhibits type I IFN-induced TYK2, STAT1 and STAT3 phosphorylation, thereby impairing type I IFN signaling and counteracting the ability of IFN-alpha to suppress the reactivation of EBV. Recruits SHP1 phosphatase to dephosphorylate STAT1. Mediates STAT2 ubiquitination and proteasomal degradation. Also suppresses type II and type III IFN signaling. Contributes to G1/S arrest in the host cell. Acts as an miRNA regulator that interferes with the function of RISC in miRNA-mediated mRNA silencing. As a result, SUMOylation is increased. When encapsulated in the exosomes released by EBV-infected host cells, may facilitate the infection in recipient cells. This Epstein-Barr virus (strain AG876) (HHV-4) protein is Cytoplasmic envelopment protein 2.